Reading from the N-terminus, the 426-residue chain is Phosphomethylpyrimidine synthase (426 aa).

Residues asparagine 65, methionine 94, tyrosine 123, histidine 162, 184–186 (SRG), 225–228 (DGMR), and glutamate 264 each bind substrate. Histidine 268 contacts Zn(2+). Tyrosine 291 is a binding site for substrate. Histidine 332 serves as a coordination point for Zn(2+). The [4Fe-4S] cluster site is built by cysteine 408, cysteine 411, and cysteine 415.

It belongs to the ThiC family. It depends on [4Fe-4S] cluster as a cofactor.

The enzyme catalyses 5-amino-1-(5-phospho-beta-D-ribosyl)imidazole + S-adenosyl-L-methionine = 4-amino-2-methyl-5-(phosphooxymethyl)pyrimidine + CO + 5'-deoxyadenosine + formate + L-methionine + 3 H(+). It participates in cofactor biosynthesis; thiamine diphosphate biosynthesis. In terms of biological role, catalyzes the synthesis of the hydroxymethylpyrimidine phosphate (HMP-P) moiety of thiamine from aminoimidazole ribotide (AIR) in a radical S-adenosyl-L-methionine (SAM)-dependent reaction. The sequence is that of Phosphomethylpyrimidine synthase from Methanococcus maripaludis (strain C7 / ATCC BAA-1331).